Consider the following 488-residue polypeptide: Inosine-5'-monophosphate dehydrogenase (488 aa).

2 consecutive CBS domains span residues 95 to 153 (VITN…SMKI) and 157 to 214 (MTKE…PNSS). NAD(+)-binding positions include Asp251 and 301-303 (GIG). The K(+) site is built by Gly303 and Gly305. Residue Ser306 participates in IMP binding. Residue Cys308 coordinates K(+). The active-site Thioimidate intermediate is the Cys308. IMP-binding positions include 341–343 (DGG), 364–365 (GS), and 388–392 (YRGMG). The active-site Proton acceptor is the Arg404. Glu416 serves as a coordination point for IMP. Glu470, Ser471, and His472 together coordinate K(+).

It belongs to the IMPDH/GMPR family. As to quaternary structure, homotetramer. K(+) is required as a cofactor.

It catalyses the reaction IMP + NAD(+) + H2O = XMP + NADH + H(+). It functions in the pathway purine metabolism; XMP biosynthesis via de novo pathway; XMP from IMP: step 1/1. Its activity is regulated as follows. Mycophenolic acid (MPA) is a non-competitive inhibitor that prevents formation of the closed enzyme conformation by binding to the same site as the amobile flap. In contrast, mizoribine monophosphate (MZP) is a competitive inhibitor that induces the closed conformation. MPA is a potent inhibitor of mammalian IMPDHs but a poor inhibitor of the bacterial enzymes. MZP is a more potent inhibitor of bacterial IMPDH. In terms of biological role, catalyzes the conversion of inosine 5'-phosphate (IMP) to xanthosine 5'-phosphate (XMP), the first committed and rate-limiting step in the de novo synthesis of guanine nucleotides, and therefore plays an important role in the regulation of cell growth. This chain is Inosine-5'-monophosphate dehydrogenase, found in Bacillus subtilis (strain 168).